The chain runs to 661 residues: Period circadian protein (661 aa).

Low complexity predominate over residues 1 to 34 (KVSDSAYSNSCSNSQSQRSGSSKSRLSGSHSSGS). The disordered stretch occupies residues 1-151 (KVSDSAYSNS…RVEGVAKSEA (151 aa)). The short motif at 53 to 66 (KRNKDKSRKKKKNK) is the Nuclear localization signal element. Residues 53 to 66 (KRNKDKSRKKKKNK) are compositionally biased toward basic residues. Residues 108–120 (ELQDQQHGEDHSE) are compositionally biased toward basic and acidic residues. 2 PAS domains span residues 223-358 (DSFC…ATPI) and 376-482 (FAIR…RVFQ). A disordered region spans residues 582–661 (TNTSIAGTGG…VTLTESLLNK (80 aa)). Residues 588 to 634 (GTGGTGTGTGTGTGTGTGTGTGTGTGTGTGTGTGTGTGTGTGTGNGT) show a composition bias toward gly residues. Repeat copies occupy residues 591–592 (GT), 593–594 (GT), 595–596 (GT), 597–598 (GT), 599–600 (GT), 601–602 (GT), 603–604 (GT), 605–606 (GT), 607–608 (GT), 609–610 (GT), 611–612 (GT), 613–614 (GT), 615–616 (GT), 617–618 (GT), 619–620 (GT), 621–622 (GT), 623–624 (GT), 625–626 (GT), 627–628 (GT), 629–630 (GT), 631–632 (GN), and 633–634 (GT). The interval 591–638 (GTGTGTGTGTGTGTGTGTGTGTGTGTGTGTGTGTGTGTGTGNGTNSGT) is 24 X 2 AA approximate tandem repeats of G-[TN]. The stretch at 635–636 (NS) is one 23; approximate repeat. Over residues 635–646 (NSGTTSSSRGGS) the composition is skewed to low complexity. Residues 637–638 (GT) form repeat 24.

Forms a heterodimer with timeless (TIM); the complex then translocates into the nucleus. Phosphorylated with a circadian rhythmicity, probably by the double-time protein (dbt). Phosphorylation could be implicated in the stability of per monomer and in the formation of heterodimer per-tim.

It localises to the nucleus. The protein resides in the cytoplasm. Its subcellular location is the perinuclear region. In terms of biological role, essential for biological clock functions. Determines the period length of circadian and ultradian rhythms; an increase in PER dosage leads to shortened circadian rhythms and a decrease leads to lengthened circadian rhythms. Essential for the circadian rhythmicity of locomotor activity, eclosion behavior, and for the rhythmic component of the male courtship song that originates in the thoracic nervous system. The biological cycle depends on the rhythmic formation and nuclear localization of the TIM-PER complex. Light induces the degradation of TIM, which promotes elimination of PER. Nuclear activity of the heterodimer coordinatively regulates PER and TIM transcription through a negative feedback loop. Behaves as a negative element in circadian transcriptional loop. Does not appear to bind DNA, suggesting indirect transcriptional inhibition. In Drosophila sechellia (Fruit fly), this protein is Period circadian protein (per).